The primary structure comprises 183 residues: Ribosome rescue factor SmrB (183 aa).

The region spanning 98–173 is the Smr domain; the sequence is LDLHGLTQLQ…GDAALLVLIE (76 aa).

Belongs to the SmrB family. As to quaternary structure, associates with collided ribosomes, but not with correctly translating polysomes.

Acts as a ribosome collision sensor. Detects stalled/collided disomes (pairs of ribosomes where the leading ribosome is stalled and a second ribosome has collided with it) and endonucleolytically cleaves mRNA at the 5' boundary of the stalled ribosome. Stalled/collided disomes form a new interface (primarily via the 30S subunits) that binds SmrB. Cleaved mRNA becomes available for tmRNA ligation, leading to ribosomal subunit dissociation and rescue of stalled ribosomes. The chain is Ribosome rescue factor SmrB from Escherichia coli O157:H7.